Reading from the N-terminus, the 144-residue chain is Transcription antitermination protein NusB (144 aa).

The protein belongs to the NusB family.

Functionally, involved in transcription antitermination. Required for transcription of ribosomal RNA (rRNA) genes. Binds specifically to the boxA antiterminator sequence of the ribosomal RNA (rrn) operons. The chain is Transcription antitermination protein NusB from Streptococcus thermophilus (strain CNRZ 1066).